A 777-amino-acid polypeptide reads, in one-letter code: C6 finger domain transcription factor adaR (777 aa).

The tract at residues 1 to 20 is disordered; the sequence is MEQRSSPARSLPPRKTTTTP. Residues 24–50 constitute a DNA-binding region (zn(2)-C6 fungal-type); it reads CELCRKRKVKCDKLTPCTNCAASGTVC. Disordered regions lie at residues 61–85, 111–144, 182–213, 419–440, 468–496, and 655–699; these read GRHATRPRRVSSPPPTSAPGETDRI, NSHSHTRTPSATSREQSVQLSDTSTFQTAPNPNT, SSLAGGQEGPIPSSDSAKSEPPNDDGIQVLGL, PQHINDSDFDPTTAAHSDPNRE, RKVDGGIPTPTSSTSGTSTSRSRTCDPSW, and LPPS…PTGS. Residues 475-489 show a composition bias toward low complexity; it reads PTPTSSTSGTSTSRS. A compositionally biased stretch (pro residues) spans 668–677; that stretch reads ATPPTFPGVP.

It localises to the nucleus. Its function is as follows. Transcription factor that specifically regulates the expression of the ada gene cluster involved in the biosynthesis of the linear tetracyclic TAN-1612 neuropeptide Y receptor antagonist. The chain is C6 finger domain transcription factor adaR from Aspergillus niger (strain ATCC MYA-4892 / CBS 513.88 / FGSC A1513).